The following is a 241-amino-acid chain: Translation initiation factor IF-3 (241 aa).

Residues 178-241 (KKTEAMAEAR…EAPAEASTEA (64 aa)) are disordered. Basic and acidic residues predominate over residues 180 to 197 (TEAMAEAREAQAARKAEA). The segment covering 208–229 (ADEDIPEGELPEGEVPEAETTE) has biased composition (acidic residues). The segment covering 230–241 (AAEAPAEASTEA) has biased composition (low complexity).

It belongs to the IF-3 family. In terms of assembly, monomer.

It is found in the cytoplasm. Its function is as follows. IF-3 binds to the 30S ribosomal subunit and shifts the equilibrium between 70S ribosomes and their 50S and 30S subunits in favor of the free subunits, thus enhancing the availability of 30S subunits on which protein synthesis initiation begins. The sequence is that of Translation initiation factor IF-3 from Streptomyces avermitilis (strain ATCC 31267 / DSM 46492 / JCM 5070 / NBRC 14893 / NCIMB 12804 / NRRL 8165 / MA-4680).